The primary structure comprises 40 residues: Cell division inhibitor MciZ (40 aa).

In terms of assembly, interacts with FtsZ. Binds to the C-terminal polymerization interface of FtsZ. Binds to FtsZ filaments.

Its activity is regulated as follows. Highly effective in inhibiting polymerization at low and intermediate concentrations of GTP and only partially effective at high GTP concentrations. Its function is as follows. Blocks Z-ring formation in the mother cell during sporulation by inhibiting the polymerization of FtsZ. Binds to the minus end of FtsZ and functions as a filament-capping protein. At high concentrations, is capable of both capping and sequestration of FtsZ. Decreases the GTPase activity of FtsZ. This chain is Cell division inhibitor MciZ, found in Bacillus subtilis (strain 168).